The sequence spans 225 residues: MAENDAKPTLPKKSGPYISSVTSHGMNLVIRGIVLFFIGVFLALVLNLLQIQRNVTLFPPDVITSIFSSAWWVPPCCGTASAVIGLLYPCMDRHLGEPHKFKREWSSVMRCVAVFVGINHASAKVDFANNIQLSLTLAALSIGLWWTFDRSRSGFGLGVGIAFLATLVSQLLVYNGVYQYTSPDFLYVRSWLPCIFFAGGITMGNIGRQLAMYECKVIAEKSHED.

Residues 1-28 (MAENDAKPTLPKKSGPYISSVTSHGMNL) are Cytoplasmic-facing. A helical membrane pass occupies residues 29–51 (VIRGIVLFFIGVFLALVLNLLQI). Residues 52 to 70 (QRNVTLFPPDVITSIFSSA) lie on the Lumenal side of the membrane. A helical membrane pass occupies residues 71–88 (WWVPPCCGTASAVIGLLY). At 89-103 (PCMDRHLGEPHKFKR) the chain is on the cytoplasmic side. Residues 104 to 126 (EWSSVMRCVAVFVGINHASAKVD) traverse the membrane as a helical segment. At 127 to 129 (FAN) the chain is on the lumenal side. A helical membrane pass occupies residues 130–148 (NIQLSLTLAALSIGLWWTF). Residues 149–153 (DRSRS) lie on the Cytoplasmic side of the membrane. A helical transmembrane segment spans residues 154–175 (GFGLGVGIAFLATLVSQLLVYN). Over 176-189 (GVYQYTSPDFLYVR) the chain is Lumenal. Residues 190-207 (SWLPCIFFAGGITMGNIG) traverse the membrane as a helical segment. Topologically, residues 208 to 225 (RQLAMYECKVIAEKSHED) are cytoplasmic. The KxHxx signature appears at 219-225 (AEKSHED).

This sequence belongs to the INSIG family. In terms of assembly, interacts with SCAP; interaction is direct and only takes place in the presence of sterols; it prevents interaction between SCAP and the coat protein complex II (COPII). Associates with the SCAP-SREBP complex; association is mediated via its interaction with SCAP and only takes place in the presence of sterols.

The protein resides in the endoplasmic reticulum membrane. In terms of biological role, oxysterol-binding protein that mediates feedback control of cholesterol synthesis by controlling both endoplasmic reticulum to Golgi transport of SCAP and degradation of HMGCR. Acts as a negative regulator of cholesterol biosynthesis by mediating the retention of the SCAP-SREBP complex in the endoplasmic reticulum, thereby blocking the processing of sterol regulatory element-binding proteins (SREBPs). Binds oxysterol, including 22-hydroxycholesterol, 24-hydroxycholesterol, 25-hydroxycholesterol and 27-hydroxycholesterol, regulating interaction with SCAP and retention of the SCAP-SREBP complex in the endoplasmic reticulum. In presence of oxysterol, interacts with SCAP, retaining the SCAP-SREBP complex in the endoplasmic reticulum, thereby preventing SCAP from escorting SREBPs to the Golgi. Sterol deprivation reduces oxysterol-binding, disrupting the interaction between INSIG2 and SCAP, thereby promoting Golgi transport of the SCAP-SREBP complex, followed by processing and nuclear translocation of SREBPs. Also regulates cholesterol synthesis by regulating degradation of HMGCR. This Gallus gallus (Chicken) protein is Insulin-induced gene 2 protein.